We begin with the raw amino-acid sequence, 1108 residues long: Retinal guanylyl cyclase 1 (1108 aa).

Positions Met1–Ser54 are cleaved as a signal peptide. Over Ala55–Glu465 the chain is Extracellular. An intrachain disulfide couples Cys108 to Cys136. Asn300 carries N-linked (GlcNAc...) asparagine glycosylation. Residues Pro466–Leu490 traverse the membrane as a helical segment. At Arg491–Lys1108 the chain is on the cytoplasmic side. Positions Gly520 to Ser552 are disordered. Residues Gly520–Ile811 enclose the Protein kinase domain. Over residues Gly529–Ser552 the composition is skewed to polar residues. The region spanning Thr883–Glu1013 is the Guanylate cyclase domain. Residues Ile1069 to Lys1108 are disordered.

This sequence belongs to the adenylyl cyclase class-4/guanylyl cyclase family. As to quaternary structure, homodimer; requires homodimerization for guanylyl cyclase activity. Interacts (via C-terminus) with RD3 (via C-terminus); promotes the exit of GUCY2E from the endoplasmic reticulum and its trafficking to the photoreceptor outer segments. Interaction with RD3 negatively regulates GUCY2E guanylate cyclase activity. There are 9 conserved cysteine residues in sensory guanylate cyclases, 6 in the extracellular domain, which may be involved in intra- or interchain disulfide bonds. Expressed in retina and enriched in photoreceptor outer segments.

The protein localises to the membrane. It is found in the photoreceptor outer segment membrane. Its subcellular location is the endoplasmic reticulum membrane. It carries out the reaction GTP = 3',5'-cyclic GMP + diphosphate. Activated by GUCA1A when free calcium ions concentration is low, and inhibited by GUCA1A when free calcium ions concentration is high. Negatively regulated by RD3; inhibits the basal and GUCA1A-stimulated guanylate cyclase activity. Its function is as follows. Catalyzes the synthesis of cyclic GMP (cGMP) in rods and cones of photoreceptors. Plays an essential role in phototransduction, by mediating cGMP replenishment. May also participate in the trafficking of membrane-asociated proteins to the photoreceptor outer segment membrane. The chain is Retinal guanylyl cyclase 1 (Gucy2e) from Rattus norvegicus (Rat).